Reading from the N-terminus, the 330-residue chain is Aquaporin-3 (330 aa).

The Cytoplasmic segment spans residues M1–E40. Residues A41 to G61 form a helical membrane-spanning segment. Topologically, residues N62–S71 are extracellular. The helical transmembrane segment at V72 to A92 threads the bilayer. At T93 to Q124 the chain is on the cytoplasmic side. Positions N99–C101 match the NPA 1 motif. The helical transmembrane segment at I125–E145 threads the bilayer. Residues S146–E157 lie on the Extracellular side of the membrane. A helical transmembrane segment spans residues T158–A178. Topologically, residues Q179–R183 are cytoplasmic. The helical transmembrane segment at A184 to D204 threads the bilayer. Over P205–S207 the chain is Extracellular. Residues F208–W228 traverse the membrane as a helical segment. Topologically, residues G229 to A264 are cytoplasmic. The short motif at N238–A240 is the NPA 2 element. The helical transmembrane segment at I265–L285 threads the bilayer. Residues V286–V330 are Extracellular-facing. The segment at R308 to V330 is disordered. Residues E314–S324 show a composition bias toward acidic residues.

The protein belongs to the MIP/aquaporin (TC 1.A.8) family.

It is found in the cell membrane. The enzyme catalyses H2O(in) = H2O(out). The catalysed reaction is CO2(out) = CO2(in). In terms of biological role, water channel required to facilitate the transport of water across membranes. Also mediates the transport of carbon dioxide across the membrane. The protein is Aquaporin-3 of Laccaria bicolor (Bicoloured deceiver).